Consider the following 217-residue polypeptide: MTDRYEQINDYIEALLKPRPDNVKRLEAYAEEHHVPIMEKAGMEVLLQILSVKQPKKILEIGTAIGYSAIRMALELPSAEIYTIERNEKRHEEAVNNIKEFQLDDRIHVFYGDALELADAVHVTAPYDVIFIDAAKGQYQNFFHLYEPMLSPDGVIITDNVLFKGLVAEDYSKIEPKRRRRLVAKIDEYNHWLMNHPDYQTAIIPVGDGLAISKKKR.

S-adenosyl-L-methionine is bound by residues Met-38, Ser-68, Glu-85, 113–114 (DA), and Asp-133. Mg(2+) is bound by residues Asp-133, Asp-159, and Asn-160.

Belongs to the class I-like SAM-binding methyltransferase superfamily. Cation-dependent O-methyltransferase family. In terms of assembly, homodimer.

The catalysed reaction is 5-hydroxyuridine(34) in tRNA + S-adenosyl-L-methionine = 5-methoxyuridine(34) in tRNA + S-adenosyl-L-homocysteine + H(+). Functionally, catalyzes the methylation of 5-hydroxyuridine (ho5U) to form 5-methoxyuridine (mo5U) at position 34 in tRNAs. This Bacillus subtilis (strain 168) protein is tRNA 5-hydroxyuridine methyltransferase.